The following is a 252-amino-acid chain: 3-deoxy-manno-octulosonate cytidylyltransferase (252 aa).

It belongs to the KdsB family.

It is found in the cytoplasm. The catalysed reaction is 3-deoxy-alpha-D-manno-oct-2-ulosonate + CTP = CMP-3-deoxy-beta-D-manno-octulosonate + diphosphate. The protein operates within nucleotide-sugar biosynthesis; CMP-3-deoxy-D-manno-octulosonate biosynthesis; CMP-3-deoxy-D-manno-octulosonate from 3-deoxy-D-manno-octulosonate and CTP: step 1/1. It functions in the pathway bacterial outer membrane biogenesis; lipopolysaccharide biosynthesis. Activates KDO (a required 8-carbon sugar) for incorporation into bacterial lipopolysaccharide in Gram-negative bacteria. The protein is 3-deoxy-manno-octulosonate cytidylyltransferase of Thiobacillus denitrificans (strain ATCC 25259 / T1).